The sequence spans 287 residues: Movement protein (287 aa).

The protein belongs to the nucleorhabdovirus type-1 movement protein family.

Its function is as follows. Transports viral genome to neighboring plant cells directly through plasmosdesmata, without any budding. The movement protein allows efficient cell to cell propagation, by bypassing the host cell wall barrier. This Colocasia esculenta (Wild taro) protein is Movement protein (3).